A 755-amino-acid chain; its full sequence is Periplasmic nitrate reductase (755 aa).

A signal peptide (tat-type signal) is located at residues 1–32; that stretch reads MSTSRRDFLKYFAMSAAVAAASGAGFGSLALA. In terms of domain architecture, 4Fe-4S Mo/W bis-MGD-type spans 38-93; sequence EKWVKGVCRYCGTGCGVLVGVKDGKAVAIQGDPNNHNAGLLCLKGSLLIPVLNSKE. [4Fe-4S] cluster is bound by residues Cys-45, Cys-48, Cys-52, and Cys-79. Mo-bis(molybdopterin guanine dinucleotide) contacts are provided by residues Lys-81, Gln-143, Asn-168, Cys-172, 208 to 212, 236 to 238, 255 to 257, Met-340, Gln-344, Asn-450, 475 to 477, and 647 to 656; these read NTSEA, DPR, GTD, IEA, and SMRVIDHWHT. Residues 648–653 and Phe-721 contribute to the substrate site; that span reads MRVIDH. Mo-bis(molybdopterin guanine dinucleotide) contacts are provided by Asn-729 and Lys-746.

Belongs to the prokaryotic molybdopterin-containing oxidoreductase family. NasA/NapA/NarB subfamily. In terms of assembly, monomer. Component of the periplasmic nitrate reductase NapAB complex composed of NapA and NapB. [4Fe-4S] cluster serves as cofactor. Mo-bis(molybdopterin guanine dinucleotide) is required as a cofactor. In terms of processing, predicted to be exported by the Tat system. The position of the signal peptide cleavage has been experimentally proven.

It is found in the periplasm. It catalyses the reaction 2 Fe(II)-[cytochrome] + nitrate + 2 H(+) = 2 Fe(III)-[cytochrome] + nitrite + H2O. With respect to regulation, activated by potassium and sodium ions and inhibited by magnesium and calcium ions. Catalytic subunit of the periplasmic nitrate reductase complex NapAB. Receives electrons from NapB and catalyzes the reduction of nitrate to nitrite. In Desulfovibrio desulfuricans (strain ATCC 27774 / DSM 6949 / MB), this protein is Periplasmic nitrate reductase.